The following is a 788-amino-acid chain: Protocadherin beta-18 (788 aa).

The first 28 residues, 1–28 (MEPGKGRAQPTRQVLLFFVFLGGSLVYS), serve as a signal peptide directing secretion. 5 Cadherin domains span residues 29–133 (ETWS…TPTF), 134–242 (LNNH…APEF), 243–347 (EKPV…PPEI), 348–452 (AMTS…APAF), and 453–562 (TQTS…SPFV). At 29-691 (ETWSYSIAEE…AQADSLTVYL (663 aa)) the chain is on the extracellular side. Asn-169 is a glycosylation site (N-linked (GlcNAc...) asparagine). Asn-419 and Asn-437 each carry an N-linked (GlcNAc...) asparagine glycan. N-linked (GlcNAc...) asparagine glycosylation is present at Asn-568. Residues 569–672 (GSAPCTELVP…LVDGFSQPYL (104 aa)) form the Cadherin 6 domain. The helical transmembrane segment at 692–712 (VVALASVSSLFLFSVFLFVAV) threads the bilayer. Topologically, residues 713–788 (RLCRRSRAAS…DSDMEKAPPF (76 aa)) are cytoplasmic.

The protein localises to the cell membrane. Its function is as follows. Potential calcium-dependent cell-adhesion protein. The chain is Protocadherin beta-18 (PCDHB18) from Pan troglodytes (Chimpanzee).